The sequence spans 251 residues: Capsid protein (251 aa).

Positions 1–35 (MPKRDAPWRHMAGTSKVSRSGNYSPSGGMGSKSNK) are disordered. The Bipartite nuclear localization signal motif lies at 3–20 (KRDAPWRHMAGTSKVSRS). Positions 15-35 (SKVSRSGNYSPSGGMGSKSNK) are enriched in polar residues. A Nuclear localization signal motif is present at residues 35-49 (KANAWVNRPMYRKPR). The segment at 54-71 (YKSPDVPKGCEGPCKVQS) is a zinc-finger region. The short motif at 96-117 (ITHRVGKRFCVKSVYILGKIWM) is the Nuclear export signal element. Residues 195–242 (RRFWKVNNHVVYNHQEAGKYENHTENALLLYMACTHASNPVYATLKIR) carry the Bipartite nuclear localization signal motif.

This sequence belongs to the geminiviridae capsid protein family. As to quaternary structure, homomultimer. Binds to single-stranded and double-stranded viral DNA. Interacts (via nuclear localization signals) with host importin alpha-1a.

It localises to the virion. Its subcellular location is the host nucleus. Encapsidates the viral DNA into characteristic twinned ('geminate') particles. Binds the genomic viral ssDNA and shuttles it into and out of the cell nucleus. The CP of bipartite geminiviruses is not required for cell-to-cell or systemic movement. This Macroptilium lathyroides (Lima bean) protein is Capsid protein.